A 188-amino-acid chain; its full sequence is Elongation factor P (188 aa).

The protein belongs to the elongation factor P family.

It is found in the cytoplasm. It functions in the pathway protein biosynthesis; polypeptide chain elongation. Functionally, involved in peptide bond synthesis. Stimulates efficient translation and peptide-bond synthesis on native or reconstituted 70S ribosomes in vitro. Probably functions indirectly by altering the affinity of the ribosome for aminoacyl-tRNA, thus increasing their reactivity as acceptors for peptidyl transferase. The chain is Elongation factor P from Gluconacetobacter diazotrophicus (strain ATCC 49037 / DSM 5601 / CCUG 37298 / CIP 103539 / LMG 7603 / PAl5).